A 63-amino-acid polypeptide reads, in one-letter code: Bowman-Birk type proteinase inhibitor (63 aa).

Disulfide bonds link C7/C60, C8/C23, C11/C56, C13/C21, C30/C37, C34/C49, and C39/C47.

As to quaternary structure, monomer.

Its function is as follows. Inhibits trypsin stoichiometrically at the molar ratio of 1:2, with a dissociation constant of 4.2 nM. Does not inhibit chymotrypsin. The polypeptide is Bowman-Birk type proteinase inhibitor (Lupinus albus (White lupine)).